Here is a 763-residue protein sequence, read N- to C-terminus: Phosphoglycerol transferase I (763 aa).

Transmembrane regions (helical) follow at residues Met1–Ala21, Trp26–Tyr46, Ile77–Val97, and Val108–Phe128.

Belongs to the OpgB family.

It is found in the cell inner membrane. The catalysed reaction is a phosphatidylglycerol + a membrane-derived-oligosaccharide D-glucose = a 1,2-diacyl-sn-glycerol + a membrane-derived-oligosaccharide 6-(glycerophospho)-D-glucose.. The protein operates within glycan metabolism; osmoregulated periplasmic glucan (OPG) biosynthesis. In terms of biological role, transfers a phosphoglycerol residue from phosphatidylglycerol to the membrane-bound nascent glucan backbones. The protein is Phosphoglycerol transferase I of Salmonella choleraesuis (strain SC-B67).